A 331-amino-acid polypeptide reads, in one-letter code: Ribose-phosphate pyrophosphokinase (331 aa).

55–57 is an ATP binding site; that stretch reads DGE. Mg(2+) contacts are provided by His-148 and Asp-187. The active site involves Lys-211. Residues Arg-213, Asp-237, and 241–245 contribute to the D-ribose 5-phosphate site; that span reads DTGGT.

Belongs to the ribose-phosphate pyrophosphokinase family. Class I subfamily. As to quaternary structure, homohexamer. The cofactor is Mg(2+).

The protein localises to the cytoplasm. It carries out the reaction D-ribose 5-phosphate + ATP = 5-phospho-alpha-D-ribose 1-diphosphate + AMP + H(+). The protein operates within metabolic intermediate biosynthesis; 5-phospho-alpha-D-ribose 1-diphosphate biosynthesis; 5-phospho-alpha-D-ribose 1-diphosphate from D-ribose 5-phosphate (route I): step 1/1. Involved in the biosynthesis of the central metabolite phospho-alpha-D-ribosyl-1-pyrophosphate (PRPP) via the transfer of pyrophosphoryl group from ATP to 1-hydroxyl of ribose-5-phosphate (Rib-5-P). The polypeptide is Ribose-phosphate pyrophosphokinase (Parasynechococcus marenigrum (strain WH8102)).